Reading from the N-terminus, the 918-residue chain is Glutamate receptor ionotropic, kainate 1 (918 aa).

The signal sequence occupies residues 1–30 (MELGTLLAQPGLWTRDTSWALLYFLCYILP). Residues 31–576 (QTAPQVLRIG…VFSFLNPLSP (546 aa)) are Extracellular-facing. 7 N-linked (GlcNAc...) asparagine glycosylation sites follow: N68, N74, N276, N379, N428, N439, and N446. Positions 531, 533, and 538 each coordinate L-glutamate. N561 carries N-linked (GlcNAc...) asparagine glycosylation. A helical transmembrane segment spans residues 577–597 (DIWMYVLLACLGVSCVLFVIA). Residues 598–653 (RFTPYEWYNPHPCNPDSDVVENNFTLLNSFWFGVGALMQQGSELMPKALSTRIVGG) are Cytoplasmic-facing. Residues 654-674 (IWWFFTLIIISSYTANLAAFL) form a helical membrane-spanning segment. Residues 675–834 (TVERMESPID…KEASALGVEN (160 aa)) lie on the Extracellular side of the membrane. 2 residues coordinate L-glutamate: S704 and T705. S725 carries the post-translational modification Phosphoserine; by PKC. E753 provides a ligand contact to L-glutamate. Position 761 is a phosphothreonine; by PKC (T761). C765 and C819 form a disulfide bridge. N-linked (GlcNAc...) asparagine glycosylation is present at N766. Residues 835 to 855 (IGGIFIVLAAGLVLSVFVAIG) traverse the membrane as a helical segment. At 856–918 (EFIYKSRKNN…IRKQSSVHTV (63 aa)) the chain is on the cytoplasmic side.

Belongs to the glutamate-gated ion channel (TC 1.A.10.1) family. GRIK1 subfamily. In terms of assembly, homotetramer or heterotetramer of pore-forming glutamate receptor subunits. Tetramers may be formed by the dimerization of dimers. Can form functional heteromeric receptors with GRIK4 and GRIK5. Interacts with KLHL17.

It is found in the cell membrane. The protein localises to the postsynaptic cell membrane. It carries out the reaction Ca(2+)(in) = Ca(2+)(out). Ionotropic glutamate receptor that functions as a cation-permeable ligand-gated ion channel, gated by L-glutamate and the glutamatergic agonist kainic acid. L-glutamate acts as an excitatory neurotransmitter at many synapses in the central nervous system. Binding of the excitatory neurotransmitter L-glutamate induces a conformation change, leading to the opening of the cation channel, and thereby converts the chemical signal to an electrical impulse. The receptor then desensitizes rapidly and enters a transient inactive state, characterized by the presence of bound agonist. The chain is Glutamate receptor ionotropic, kainate 1 (GRIK1) from Macaca fascicularis (Crab-eating macaque).